A 292-amino-acid polypeptide reads, in one-letter code: NAD-dependent protein deacetylase sir-2.4 (292 aa).

The region spanning 31-292 is the Deacetylase sirtuin-type domain; that stretch reads IEKLRTLYNH…DEVPIPLKIS (262 aa). NAD(+) contacts are provided by residues 56–75 and 116–119; these read GAGV…QGVW and QNVD. The active-site Proton acceptor is the histidine 136. 4 residues coordinate Zn(2+): cysteine 144, cysteine 147, cysteine 163, and cysteine 169. Residues 216–218, 242–244, and valine 260 contribute to the NAD(+) site; these read GTS and NYQ.

Belongs to the sirtuin family. Class IV subfamily. Zn(2+) is required as a cofactor.

The catalysed reaction is N(6)-acetyl-L-lysyl-[protein] + NAD(+) + H2O = 2''-O-acetyl-ADP-D-ribose + nicotinamide + L-lysyl-[protein]. Its function is as follows. NAD-dependent protein deacetylase. This is NAD-dependent protein deacetylase sir-2.4 (sir-2.4) from Caenorhabditis elegans.